The sequence spans 261 residues: ATP synthase subunit a (261 aa).

6 helical membrane passes run 45 to 65 (ITNV…ILVL), 107 to 127 (VMTL…PLSF), 133 to 153 (MAVT…LGFM), 162 to 182 (MFWV…IEVI), 209 to 229 (IAGF…VTAI), and 232 to 252 (LELL…CVYL).

This sequence belongs to the ATPase A chain family. As to quaternary structure, F-type ATPases have 2 components, CF(1) - the catalytic core - and CF(0) - the membrane proton channel. CF(1) has five subunits: alpha(3), beta(3), gamma(1), delta(1), epsilon(1). CF(0) has four main subunits: a, b, b' and c.

Its subcellular location is the cell inner membrane. Its function is as follows. Key component of the proton channel; it plays a direct role in the translocation of protons across the membrane. The sequence is that of ATP synthase subunit a from Cereibacter sphaeroides (strain ATCC 17029 / ATH 2.4.9) (Rhodobacter sphaeroides).